Consider the following 501-residue polypeptide: ATP synthase subunit alpha (501 aa).

169–176 is a binding site for ATP; it reads GDRQTGKT.

It belongs to the ATPase alpha/beta chains family. As to quaternary structure, F-type ATPases have 2 components, CF(1) - the catalytic core - and CF(0) - the membrane proton channel. CF(1) has five subunits: alpha(3), beta(3), gamma(1), delta(1), epsilon(1). CF(0) has three main subunits: a(1), b(2) and c(9-12). The alpha and beta chains form an alternating ring which encloses part of the gamma chain. CF(1) is attached to CF(0) by a central stalk formed by the gamma and epsilon chains, while a peripheral stalk is formed by the delta and b chains.

The protein localises to the cell inner membrane. It carries out the reaction ATP + H2O + 4 H(+)(in) = ADP + phosphate + 5 H(+)(out). Its function is as follows. Produces ATP from ADP in the presence of a proton gradient across the membrane. The alpha chain is a regulatory subunit. The chain is ATP synthase subunit alpha from Campylobacter jejuni subsp. jejuni serotype O:23/36 (strain 81-176).